A 354-amino-acid polypeptide reads, in one-letter code: Trans-enoyl reductase pydC (354 aa).

In terms of domain architecture, Enoyl reductase (ER) spans 16–342 (ANTDPVTFEI…RREVSGEKIV (327 aa)). NADP(+) is bound by residues 51–54 (CDYK), 180–183 (SPKN), Tyr198, 245–246 (FE), and 336–337 (VS).

The protein belongs to the zinc-containing alcohol dehydrogenase family. As to quaternary structure, monomer.

The protein operates within mycotoxin biosynthesis. Functionally, trans-enoyl reductase; part of the gene cluster that mediates the biosynthesis of pyrrocidines, fungal natural products containing a macrocyclic para-cyclophane connected to a decahydrofluorene ring system that show potent antibiotic activities toward Gram-negative bacteria. Within the pathway, the PKS-NRPS pydA, with the help of the trans-enoyl reductase pydC, synthesize the polyketide-tyrosyl acyl thioester product which can be reductively off-loaded by the terminal reductase (R) domain in pydA. The PKS module of pydA acts in combination with the trans-acting enoyl reductase pydC to produce a methylated polyketide attached to the ACP domain. In parallel, the adenylation (A) domain of the NRPS module activated L-tyrosine, which is then transferred to the ACP domain. The condensation (C) domain subsequently link this group to the polyketide chain, forming an enzyme-bound amide. The alpha/beta hydrolase pydG is then required to catalyze the subsequent Knoevenagel condensation that affords the 3-pyrrolin-2-one ring, whereas the four proteins pydB, pydE, pydX and pydZ then function synergistically to form the cyclophane. PydB and the membrane-bound pydX and pydZ are lipid-binding proteins that can sequester and mold the pdyG product into the inverse S-shape. Binding of the medium chain reductase pydE to the complex would trigger the cascade oxidative cyclization. PydY is involved in the Diels-Alder cycloaddition that forms the decahydrofluorene core. Additional non-enzymatic hydroxylation yields pyrrocidine A2 which can be further reduced into pyrrocidine B by an endogenous reductase. In Acremonium sp, this protein is Trans-enoyl reductase pydC.